Consider the following 251-residue polypeptide: Chromobox protein homolog 7 (251 aa).

One can recognise a Chromo domain in the interval 11-69; it reads FAVESIRKKRVRKGKVEYLVKWKGWPPKYSTWEPEEHILDPRLVMAYEEKEERDRASGY. The disordered stretch occupies residues 190–220; that stretch reads EPAAQPPEEEADADLAEGPPPWTPALPSSEV. The segment at 223–236 is required for cellular lifespan extension; that stretch reads TDITANSITVTFRE.

As to quaternary structure, component of a PRC1-like complex. Interacts with RING1 and RNF2/RING1B, but not with BMI1, EED or EZH2. Interacts with PCGF1, PCGF2, PCGF3, PCGF5 and PCGF6.

The protein localises to the nucleus. In terms of biological role, component of a Polycomb group (PcG) multiprotein PRC1-like complex, a complex class required to maintain the transcriptionally repressive state of many genes, including Hox genes, throughout development. PcG PRC1 complex acts via chromatin remodeling and modification of histones; it mediates monoubiquitination of histone H2A 'Lys-119', rendering chromatin heritably changed in its expressibility. Promotes histone H3 trimethylation at 'Lys-9' (H3K9me3). Binds to trimethylated lysine residues in histones, and possibly also other proteins. Regulator of cellular lifespan by maintaining the repression of CDKN2A, but not by inducing telomerase activity. This chain is Chromobox protein homolog 7 (CBX7), found in Homo sapiens (Human).